Here is a 284-residue protein sequence, read N- to C-terminus: RNase adapter protein RapZ (284 aa).

8-15 (GRSGSGKS) lines the ATP pocket. GTP is bound at residue 56 to 59 (DVRN). The RNA-binding stretch occupies residues 266–284 (RSRGKNVQSRHRTLEKRKT).

Belongs to the RapZ-like family. RapZ subfamily. Homotrimer.

In terms of biological role, modulates the synthesis of GlmS, by affecting the processing and stability of the regulatory small RNA GlmZ. When glucosamine-6-phosphate (GlcN6P) concentrations are high in the cell, RapZ binds GlmZ and targets it to cleavage by RNase E. Consequently, GlmZ is inactivated and unable to activate GlmS synthesis. Under low GlcN6P concentrations, RapZ is sequestered and inactivated by an other regulatory small RNA, GlmY, preventing GlmZ degradation and leading to synthesis of GlmS. This is RNase adapter protein RapZ from Salmonella typhi.